The following is a 456-amino-acid chain: RuvB-like 1 (456 aa).

The segment at 1-20 is disordered; it reads MKIEEVKSTTKTQRIASHSH. 70–77 provides a ligand contact to ATP; it reads GPPGTGKT.

The protein belongs to the RuvB family. Forms homohexameric rings. Can form a dodecamer with ruvbl2 made of two stacked hexameric rings. Is a component of the RNA polymerase II holoenzyme complex. Component of the chromatin-remodeling Ino80 complex. Component of some MLL1/MLL complex.

It localises to the nucleus. The protein localises to the dynein axonemal particle. The enzyme catalyses ATP + H2O = ADP + phosphate + H(+). Functionally, has single-stranded DNA-stimulated ATPase and ATP-dependent DNA helicase (3' to 5') activity suggesting a role in nuclear processes such as recombination and transcription. Proposed core component of the chromatin remodeling Ino80 complex which exhibits DNA- and nucleosome-activated ATPase activity and catalyzes ATP-dependent nucleosome sliding. May act as a negative regulator of embryonic heart growth. The protein is RuvB-like 1 (ruvbl1) of Danio rerio (Zebrafish).